Reading from the N-terminus, the 205-residue chain is Adenylyl-sulfate kinase (205 aa).

31 to 38 (GLSGSGKS) is an ATP binding site. The Phosphoserine intermediate role is filled by serine 105.

Belongs to the APS kinase family.

It catalyses the reaction adenosine 5'-phosphosulfate + ATP = 3'-phosphoadenylyl sulfate + ADP + H(+). The protein operates within sulfur metabolism; hydrogen sulfide biosynthesis; sulfite from sulfate: step 2/3. In terms of biological role, catalyzes the synthesis of activated sulfate. This is Adenylyl-sulfate kinase from Shewanella halifaxensis (strain HAW-EB4).